Reading from the N-terminus, the 125-residue chain is Holo-[acyl-carrier-protein] synthase (125 aa).

Asp-8 and Glu-57 together coordinate Mg(2+).

It belongs to the P-Pant transferase superfamily. AcpS family. Mg(2+) is required as a cofactor.

Its subcellular location is the cytoplasm. The catalysed reaction is apo-[ACP] + CoA = holo-[ACP] + adenosine 3',5'-bisphosphate + H(+). Functionally, transfers the 4'-phosphopantetheine moiety from coenzyme A to a Ser of acyl-carrier-protein. The polypeptide is Holo-[acyl-carrier-protein] synthase (Aromatoleum aromaticum (strain DSM 19018 / LMG 30748 / EbN1) (Azoarcus sp. (strain EbN1))).